The following is a 38-amino-acid chain: Photosystem II reaction center protein L (38 aa).

The chain crosses the membrane as a helical span at residues 17–37 (SLFWGLLLIFVLAVLFSSYFF).

The protein belongs to the PsbL family. PSII is composed of 1 copy each of membrane proteins PsbA, PsbB, PsbC, PsbD, PsbE, PsbF, PsbH, PsbI, PsbJ, PsbK, PsbL, PsbM, PsbT, PsbY, PsbZ, Psb30/Ycf12, at least 3 peripheral proteins of the oxygen-evolving complex and a large number of cofactors. It forms dimeric complexes.

Its subcellular location is the plastid. The protein resides in the chloroplast thylakoid membrane. In terms of biological role, one of the components of the core complex of photosystem II (PSII). PSII is a light-driven water:plastoquinone oxidoreductase that uses light energy to abstract electrons from H(2)O, generating O(2) and a proton gradient subsequently used for ATP formation. It consists of a core antenna complex that captures photons, and an electron transfer chain that converts photonic excitation into a charge separation. This subunit is found at the monomer-monomer interface and is required for correct PSII assembly and/or dimerization. The sequence is that of Photosystem II reaction center protein L from Cyanidium caldarium (Red alga).